A 238-amino-acid polypeptide reads, in one-letter code: Proteasome subunit beta type-6 (238 aa).

Ala2 carries the N-acetylalanine modification. Residues 2–33 (AAALAVRRAGSAPAFGPEALTPDWENREVSTG) constitute a propeptide, removed in mature form. The active-site Nucleophile is Thr34. Thr68 is modified (phosphothreonine).

Belongs to the peptidase T1B family. In terms of assembly, the 26S proteasome consists of a 20S proteasome core and two 19S regulatory subunits. The 20S proteasome core is a barrel-shaped complex made of 28 subunits that are arranged in four stacked rings. The two outer rings are each formed by seven alpha subunits, and the two inner rings are formed by seven beta subunits. The proteolytic activity is exerted by three beta-subunits PSMB5, PSMB6 and PSMB7.

The protein resides in the cytoplasm. The protein localises to the nucleus. The enzyme catalyses Cleavage of peptide bonds with very broad specificity.. In terms of biological role, component of the 20S core proteasome complex involved in the proteolytic degradation of most intracellular proteins. This complex plays numerous essential roles within the cell by associating with different regulatory particles. Associated with two 19S regulatory particles, forms the 26S proteasome and thus participates in the ATP-dependent degradation of ubiquitinated proteins. The 26S proteasome plays a key role in the maintenance of protein homeostasis by removing misfolded or damaged proteins that could impair cellular functions, and by removing proteins whose functions are no longer required. Associated with the PA200 or PA28, the 20S proteasome mediates ubiquitin-independent protein degradation. This type of proteolysis is required in several pathways including spermatogenesis (20S-PA200 complex) or generation of a subset of MHC class I-presented antigenic peptides (20S-PA28 complex). Within the 20S core complex, PSMB6 displays a peptidylglutamyl-hydrolyzing activity also termed postacidic or caspase-like activity, meaning that the peptides bond hydrolysis occurs directly after acidic residues. The chain is Proteasome subunit beta type-6 (Psmb6) from Mus musculus (Mouse).